The sequence spans 264 residues: Type 1 encapsulin shell protein (264 aa).

The protein belongs to the encapsulin family. Family 1 subfamily. In terms of assembly, forms hollow shells composed of 60 subunits. Monomers probably form pentamers which assemble into the shell. There are 12 pores where the pentamers meet as well as 3-fold axis channels and dimer channels; none are larger than 3-4 Angstroms in diameter. The N-terminus of the protein is inside the shell, the C-terminus is outside.

Its subcellular location is the encapsulin nanocompartment. Shell component of a type 1 encapsulin nanocompartment. Assembles into proteinaceous shells 21-24 nm in diameter. Empty organelles can be expressed in E.coli. Cargo proteins (DypB) are targeted to the interior via their C-terminal extensions. This is Type 1 encapsulin shell protein from Rhodococcus erythropolis (strain PR4 / NBRC 100887).